The following is a 359-amino-acid chain: MPAHLLQDDISSSYTTTTTITAPPSRVLQNGGDKLETMPLYLEDDIRPDIKDDIYDPTYKDKEGPSPKVEYVWRNIILMSLLHLGALYGITLIPTCKFYTWLWGVFYYFVSALGITAGAHRLWSHRSYKARLPLRLFLIIANTMAFQNDVYEWARDHRAHHKFSETHADPHNSRRGFFFSHVGWLLVRKHPAVKEKGSTLDLSDLEAEKLVMFQRRYYKPGLLMMCFILPTLVPWYFWGETFQNSVFVATFLRYAVVLNATWLVNSAAHLFGYRPYDKNISPRENILVSLGAVGEGFHNYHHSFPYDYSASEYRWHINFTTFFIDCMAALGLAYDRKKVSKAAILARIKRTGDGNYKSG.

At 1–72 the chain is on the cytoplasmic side; that stretch reads MPAHLLQDDI…EGPSPKVEYV (72 aa). The helical transmembrane segment at 73–93 threads the bilayer; that stretch reads WRNIILMSLLHLGALYGITLI. N75 provides a ligand contact to substrate. The Lumenal portion of the chain corresponds to 94–97; sequence PTCK. The helical transmembrane segment at 98 to 118 threads the bilayer; sequence FYTWLWGVFYYFVSALGITAG. Residues 119-217 lie on the Cytoplasmic side of the membrane; that stretch reads AHRLWSHRSY…EKLVMFQRRY (99 aa). Residues H120 and H125 each coordinate Fe cation. Positions 120–125 match the Histidine box-1 motif; it reads HRLWSH. N148, R155, and D156 together coordinate substrate. Residues H157, H160, and H161 each coordinate Fe cation. A Histidine box-2 motif is present at residues 157–161; the sequence is HRAHH. 2 residues coordinate substrate: R188 and K189. Residues S198 and S203 each carry the phosphoserine modification. A helical transmembrane segment spans residues 218 to 237; it reads YKPGLLMMCFILPTLVPWYF. At 238–241 the chain is on the lumenal side; the sequence is WGET. Residues 242-263 traverse the membrane as a helical segment; that stretch reads FQNSVFVATFLRYAVVLNATWL. Substrate is bound at residue W262. The Cytoplasmic segment spans residues 264-359; the sequence is VNSAAHLFGY…RTGDGNYKSG (96 aa). Fe cation-binding residues include H269, H298, H301, and H302. Residues 298–302 carry the Histidine box-3 motif; it reads HNYHH.

Belongs to the fatty acid desaturase type 1 family. May self-associate and form homodimers. The cofactor is Fe(2+). Detected in fetal liver, lung and brain. Highly expressed in adult adipose tissue, and at lower levels in adult brain and lung.

It is found in the endoplasmic reticulum membrane. It carries out the reaction octadecanoyl-CoA + 2 Fe(II)-[cytochrome b5] + O2 + 2 H(+) = (9Z)-octadecenoyl-CoA + 2 Fe(III)-[cytochrome b5] + 2 H2O. The catalysed reaction is hexadecanoyl-CoA + 2 Fe(II)-[cytochrome b5] + O2 + 2 H(+) = (9Z)-hexadecenoyl-CoA + 2 Fe(III)-[cytochrome b5] + 2 H2O. In terms of biological role, stearoyl-CoA desaturase that utilizes O(2) and electrons from reduced cytochrome b5 to introduce the first double bond into saturated fatty acyl-CoA substrates. Catalyzes the insertion of a cis double bond at the delta-9 position into fatty acyl-CoA substrates including palmitoyl-CoA and stearoyl-CoA. Gives rise to a mixture of 16:1 and 18:1 unsaturated fatty acids. Plays an important role in lipid biosynthesis. Plays an important role in regulating the expression of genes that are involved in lipogenesis and in regulating mitochondrial fatty acid oxidation. Plays an important role in body energy homeostasis. Contributes to the biosynthesis of membrane phospholipids, cholesterol esters and triglycerides. In Homo sapiens (Human), this protein is Stearoyl-CoA desaturase (SCD).